We begin with the raw amino-acid sequence, 504 residues long: Paired zinc finger protein 1 (504 aa).

2 consecutive C2H2-type zinc fingers follow at residues 12–35 (LLCG…RQRH) and 39–62 (HMCL…KNKH). The C2H2-type 3; degenerate zinc-finger motif lies at 68-91 (FICVCCNWSFGTEIYLKCHEECMK). Disordered regions lie at residues 115 to 136 (ALNT…SPVP) and 154 to 173 (IESA…LVSG). Polar residues predominate over residues 159-172 (RSSASTSTPRTLVS). 2 consecutive C2H2-type zinc fingers follow at residues 179–202 (IPCG…RRFH) and 206–229 (HTCL…KSQH). The C2H2-type 6; degenerate zinc finger occupies 235 to 258 (YNCLCCNWTFLNQVHLISHKTCLK). The segment at 309–332 (LSCKSCGKFFYSERSLSKHHRQIH) adopts a C2H2-type 7 zinc-finger fold. The segment at 365–389 (FNCRCCNWSFATRRCLMSHVECLKK) adopts a C2H2-type 8; degenerate zinc-finger fold.

In terms of tissue distribution, expressed in proximal gonad.

Possible transcriptional regulator. Involved in promoting segregation of chromosomes during meiosis, perhaps acting downstream of the let-60 RAS / mpk-1 MAPK signaling pathway. In Caenorhabditis elegans, this protein is Paired zinc finger protein 1.